Consider the following 332-residue polypeptide: Succinylglutamate desuccinylase (332 aa).

Residues His-59, Glu-62, and His-151 each contribute to the Zn(2+) site. Glu-215 is a catalytic residue.

It belongs to the AspA/AstE family. Succinylglutamate desuccinylase subfamily. Zn(2+) is required as a cofactor.

The catalysed reaction is N-succinyl-L-glutamate + H2O = L-glutamate + succinate. It participates in amino-acid degradation; L-arginine degradation via AST pathway; L-glutamate and succinate from L-arginine: step 5/5. Transforms N(2)-succinylglutamate into succinate and glutamate. In Pseudomonas aeruginosa (strain UCBPP-PA14), this protein is Succinylglutamate desuccinylase.